Here is a 408-residue protein sequence, read N- to C-terminus: CST complex subunit STN1 (408 aa).

Residues 8-195 (MQCESSPKEE…KVYDQPFRNP (188 aa)) form an interaction with CTC1 region. The OB DNA-binding region spans 64-165 (VDIMGAVISV…EICATIYYKV (102 aa)). 2 winged helix-turn-helix (wHTH) regions span residues 201–304 (EALN…YVTS) and 305–408 (KDKD…YTAF).

It belongs to the STN1 family. In terms of assembly, component of the CST complex, composed of TEN1/C17orf106, CTC1/C17orf68 and STN1; in the complex interacts directly with TEN1 and CTC1. Interacts with ACD/TPP1, POT1 and POLA1.

Its subcellular location is the nucleus. It is found in the chromosome. The protein localises to the telomere. Its function is as follows. Component of the CST complex proposed to act as a specialized replication factor promoting DNA replication under conditions of replication stress or natural replication barriers such as the telomere duplex. The CST complex binds single-stranded DNA with high affinity in a sequence-independent manner, while isolated subunits bind DNA with low affinity by themselves. Initially the CST complex has been proposed to protect telomeres from DNA degradation. However, the CST complex has been shown to be involved in several aspects of telomere replication. The CST complex inhibits telomerase and is involved in telomere length homeostasis; it is proposed to bind to newly telomerase-synthesized 3' overhangs and to terminate telomerase action implicating the association with the ACD:POT1 complex thus interfering with its telomerase stimulation activity. The CST complex is also proposed to be involved in fill-in synthesis of the telomeric C-strand probably implicating recruitment and activation of DNA polymerase alpha. The CST complex facilitates recovery from many forms of exogenous DNA damage; seems to be involved in the re-initiation of DNA replication at repaired forks and/or dormant origins. Required for efficicient replication of the duplex region of the telomere. Promotes efficient replication of lagging-strand telomeres. Promotes general replication start following replication-fork stalling implicating new origin firing. May be in involved in C-strand fill-in during late S/G2 phase independent of its role in telomere duplex replication. This Rattus norvegicus (Rat) protein is CST complex subunit STN1.